Reading from the N-terminus, the 93-residue chain is Stromal cell-derived factor 1 (93 aa).

The signal sequence occupies residues 1–21; sequence MDIRTLALFSILLGSLCLSEG. The Receptor activation motif motif lies at 22–23; sequence KP. Residues 29 to 33 are receptor and heparin binding; sequence RCPCR. Disulfide bonds link cysteine 30–cysteine 55 and cysteine 32–cysteine 71. Heparin is bound by residues 41 to 51, arginine 62, glutamine 69, and lysine 85; that span reads KSNIKHLKILS. 2 receptor binding regions span residues 48 to 50 and 60 to 64; these read KIL and VARLK.

This sequence belongs to the intercrine alpha (chemokine CxC) family. Monomer or homodimer; in equilibrium. Dimer formation is induced by non acidic pH and the presence of multivalent anions, and by binding to cxcr4 or heparin.

The protein resides in the secreted. Functionally, chemoattractant. Activates the C-X-C chemokine receptor cxcr4 to induce a rapid and transient rise in the level of intracellular calcium ions, and chemotaxis. Signaling with cxcr4 mediates the directional movement of mesodermal cells during gastrulation. Binds to the allosteric site (site 2) of integrins and activates them in a cxcr4-independent manner. The chain is Stromal cell-derived factor 1 from Xenopus tropicalis (Western clawed frog).